Reading from the N-terminus, the 431-residue chain is Adenylosuccinate synthetase (431 aa).

Residues 12–18 and 40–42 each bind GTP; these read GDEGKGK and GHT. The active-site Proton acceptor is aspartate 13. Positions 13 and 40 each coordinate Mg(2+). Residues 13 to 16, 38 to 41, threonine 129, arginine 143, glutamine 224, and threonine 239 contribute to the IMP site; these read DEGK and NAGH. The active-site Proton donor is the histidine 41. Lysine 292 is covalently cross-linked (Isoglutamyl lysine isopeptide (Lys-Gln) (interchain with Q-Cter in protein Pup)). 299-305 is a substrate binding site; sequence VTTGRAR. Arginine 303 is an IMP binding site. GTP contacts are provided by residues arginine 305, 331–333, and 413–415; these read KLD and GVG.

This sequence belongs to the adenylosuccinate synthetase family. In terms of assembly, homodimer. It depends on Mg(2+) as a cofactor.

The protein resides in the cytoplasm. The catalysed reaction is IMP + L-aspartate + GTP = N(6)-(1,2-dicarboxyethyl)-AMP + GDP + phosphate + 2 H(+). It participates in purine metabolism; AMP biosynthesis via de novo pathway; AMP from IMP: step 1/2. Functionally, plays an important role in the de novo pathway of purine nucleotide biosynthesis. Catalyzes the first committed step in the biosynthesis of AMP from IMP. This chain is Adenylosuccinate synthetase, found in Mycolicibacterium smegmatis (strain ATCC 700084 / mc(2)155) (Mycobacterium smegmatis).